The sequence spans 633 residues: Mini-chromosome maintenance complex-binding protein (633 aa).

A disordered region spans residues 154 to 198; the sequence is PSTSYTPSRHKRSYEEDEDMEQHPSKQKEQHMGSGGDSHGCGEPK. Basic and acidic residues predominate over residues 174–184; that stretch reads EQHPSKQKEQH.

This sequence belongs to the MCMBP family. As to quaternary structure, interacts with the MCM complex: associates with the MCM3-7 complex which lacks MCM2, while it does not interact with the MCM complex when MCM2 is present (MCM2-7 complex).

It is found in the nucleus. Functionally, associated component of the MCM complex that acts as a regulator of DNA replication. Binds to the MCM complex during late S phase and promotes the disassembly of the MCM complex from chromatin, thereby acting as a key regulator of pre-replication complex (pre-RC) unloading from replicated DNA. Can dissociate the MCM complex without addition of ATP; probably acts by destabilizing interactions of each individual subunits of the MCM complex. Required for sister chromatid cohesion. The protein is Mini-chromosome maintenance complex-binding protein (MCMBP) of Gallus gallus (Chicken).